The sequence spans 282 residues: Tyrosine recombinase XerA (282 aa).

The region spanning 2-79 (EAINEVIEEY…ALRSYFRFEG (78 aa)) is the Core-binding (CB) domain. The 177-residue stretch at 95 to 271 (SLPKSLTREE…TVEHLRKAQE (177 aa)) folds into the Tyr recombinase domain. Active-site residues include R132, K157, H223, R226, and H249. Catalysis depends on Y258, which acts as the O-(3'-phospho-DNA)-tyrosine intermediate.

It belongs to the 'phage' integrase family. XerA subfamily.

The protein resides in the cytoplasm. Its function is as follows. Site-specific tyrosine recombinase, which acts by catalyzing the cutting and rejoining of the recombining DNA molecules. This Thermococcus onnurineus (strain NA1) protein is Tyrosine recombinase XerA.